The following is a 231-amino-acid chain: Large ribosomal subunit protein uL1 (231 aa).

It belongs to the universal ribosomal protein uL1 family. In terms of assembly, part of the 50S ribosomal subunit.

In terms of biological role, binds directly to 23S rRNA. The L1 stalk is quite mobile in the ribosome, and is involved in E site tRNA release. Functionally, protein L1 is also a translational repressor protein, it controls the translation of the L11 operon by binding to its mRNA. The polypeptide is Large ribosomal subunit protein uL1 (Methylococcus capsulatus (strain ATCC 33009 / NCIMB 11132 / Bath)).